We begin with the raw amino-acid sequence, 278 residues long: MARDKEDQNNENPSIVQNMSFPFNTIFLISSAIFLVTAAFWFVAVMTLHYRTDECNRFVTTPGIFISFSLLAMSLTGFYAAYFKSDCLFRIHFFIFFLWMFVVVSKAIFVIFLHKETNPRLFPGTKIYEFRYEDYSGWVSRLVIKDDEWYRTRRCLVKDNVCNRLNHKMPASEFYQMNLTPIQSGCCKPPLSCGLNYEKPNNWTVSRYYNNLEVDCKRWNNSADTLCFDCDSCKAVIIADVHNTSFSITVNIIHIIFSLCIGMTGWFAWLRILRESQK.

The Cytoplasmic segment spans residues 1 to 25 (MARDKEDQNNENPSIVQNMSFPFNT). A helical membrane pass occupies residues 26–46 (IFLISSAIFLVTAAFWFVAVM). At 47–62 (TLHYRTDECNRFVTTP) the chain is on the extracellular side. Residues 63-83 (GIFISFSLLAMSLTGFYAAYF) form a helical membrane-spanning segment. At 84-92 (KSDCLFRIH) the chain is on the cytoplasmic side. Residues 93–113 (FFIFFLWMFVVVSKAIFVIFL) form a helical membrane-spanning segment. Residues 114-249 (HKETNPRLFP…DVHNTSFSIT (136 aa)) are Extracellular-facing. N-linked (GlcNAc...) asparagine glycosylation is found at N202, N220, and N243. The chain crosses the membrane as a helical span at residues 250–270 (VNIIHIIFSLCIGMTGWFAWL). The Cytoplasmic portion of the chain corresponds to 271 to 278 (RILRESQK).

This sequence belongs to the tetraspanin (TM4SF) family.

The protein localises to the membrane. May be involved in the regulation of cell differentiation. The protein is Tetraspanin-13 (TET13) of Arabidopsis thaliana (Mouse-ear cress).